We begin with the raw amino-acid sequence, 129 residues long: MSYKFPNNLKYADTHEYVKEENGLLKIGVSEFAIDQLGDIVFVELVEKGTNLQKGETFGTIESVKAVEEVYLPFAGEVLSVNESVIDNPEILQNDPIGNGWLLIIKPESNVLLDELMNSDEYKSKVSPN.

The 83-residue stretch at 24–106 (LLKIGVSEFA…IGNGWLLIIK (83 aa)) folds into the Lipoyl-binding domain. Position 65 is an N6-lipoyllysine (Lys-65).

This sequence belongs to the GcvH family. As to quaternary structure, the glycine cleavage system is composed of four proteins: P, T, L and H. (R)-lipoate serves as cofactor.

Its function is as follows. The glycine cleavage system catalyzes the degradation of glycine. The H protein shuttles the methylamine group of glycine from the P protein to the T protein. The chain is Glycine cleavage system H protein from Prochlorococcus marinus (strain MIT 9515).